Here is a 123-residue protein sequence, read N- to C-terminus: Probable non-functional immunoglobulin lambda variable 11-55 (123 aa).

An N-terminal signal peptide occupies residues 1-19; it reads MALTPLLLLLLSHCTGSLS. The framework-1 stretch occupies residues 20–44; that stretch reads RPVLTQPPSLSASPGATARLPCTLS. Residues 21–123 form the Ig-like domain; sequence PVLTQPPSLS…YCQVYESSAN (103 aa). Residues cysteine 41 and cysteine 115 are joined by a disulfide bond. Residues 45-53 form a complementarity-determining-1 region; that stretch reads SDLSVGGKN. Positions 54–70 are framework-2; it reads MFWYQQKLGSSPRLFLY. The tract at residues 71–77 is complementarity-determining-2; the sequence is HYSDSDK. A framework-3 region spans residues 78 to 115; sequence QLGPGVPSRVSGSKETSSNTAFLLISGLQPEDEADYYC. The interval 116–123 is complementarity-determining-3; the sequence is QVYESSAN.

Immunoglobulins are composed of two identical heavy chains and two identical light chains; disulfide-linked.

The protein localises to the secreted. It is found in the cell membrane. Probable non-functional open reading frame (ORF) of V region of the variable domain of immunoglobulin light chains. Non-functional ORF generally cannot participate in the synthesis of a productive immunoglobulin chain due to altered V-(D)-J or switch recombination and/or splicing site (at mRNA level) and/or conserved amino acid change (protein level). Immunoglobulins, also known as antibodies, are membrane-bound or secreted glycoproteins produced by B lymphocytes. In the recognition phase of humoral immunity, the membrane-bound immunoglobulins serve as receptors which, upon binding of a specific antigen, trigger the clonal expansion and differentiation of B lymphocytes into immunoglobulins-secreting plasma cells. Secreted immunoglobulins mediate the effector phase of humoral immunity, which results in the elimination of bound antigens. The antigen binding site is formed by the variable domain of one heavy chain, together with that of its associated light chain. Thus, each immunoglobulin has two antigen binding sites with remarkable affinity for a particular antigen. The variable domains are assembled by a process called V-(D)-J rearrangement and can then be subjected to somatic hypermutations which, after exposure to antigen and selection, allow affinity maturation for a particular antigen. The polypeptide is Probable non-functional immunoglobulin lambda variable 11-55 (Homo sapiens (Human)).